A 373-amino-acid chain; its full sequence is 3-isopropylmalate dehydrogenase gloI (373 aa).

Substrate-binding residues include Ser-92, Arg-98, and Arg-108. Mg(2+) is bound by residues Asp-228, Asp-253, and Asp-257. NADP(+)-binding positions include 294 to 300 and Asn-307; that span reads HGSAPDI.

It belongs to the isocitrate and isopropylmalate dehydrogenases family. As to quaternary structure, homodimer. Mg(2+) is required as a cofactor. Requires Mn(2+) as cofactor.

The catalysed reaction is (2R,3S)-3-isopropylmalate + NAD(+) = 4-methyl-2-oxopentanoate + CO2 + NADH. It functions in the pathway mycotoxin biosynthesis. 3-isopropylmalate dehydrogenase; part of the gene cluster that mediates the biosynthesis of pneumocandins, lipohexapeptides of the echinocandin family that prevent fungal cell wall formation by non-competitive inhibition of beta-1,3-glucan synthase. The 10,12-dimethylmyristoyl side chain is synthesized by the reducing polyketide synthase gloL/GLPKS4. The thioesterase gloN/GLHYD exclusively interacts with gloL/GLPKS4 to maintain turnover of the polyketide side chain. The 10R,12S-dimethylmyristic acid is then transferred to the first thiolation domain of the nonribosomal peptide synthetase gloA/GLNRPS4 by the acyl-AMP ligase gloD/GLligase, followed by its acylation to L-ornithine to trigger elongation of the cyclic hexapeptide. L-ornithine, 4R-hydroxyl-L-proline (generated from L-proline by the dioxygenase gloF/GLOXY2), 3S-hydroxyl-L-homotyrosine (generated by gloG/GLHtyB, gloH/GLHtyA, gloI/GLHtyC, gloJ/GLHtyD and hydroxylated at C-3 by the dioxygenase gloM/GLOXY1), 3R-hydroxyl-L-glutamine (generated from L-glutamine probably by the dioxygenase gloE/GLOXY3) and 3S-hydroxyl-L-proline (generated from L-proline by the dioxygenase gloF/GLOXY2 to yield pneumocandin B0), or 3S-hydroxyl-4S-methyl-L-proline (generated from L-leucine by the dioxygenase gloC/GLOXY4 to yield pneumocandin A0) are sequentially added to the growing chain. The last C domain of gloA/GLNRPS4 is proposed to be responsible for cyclization by condensation to form the peptide bond between L-ornithine and 3S-hydroxyl-4S-methyl-L-proline (for pneumocandin A0) or 3S-hydroxyl-L-proline (for pneumocandin B0). Finally, the subsequent C-4 hydroxylation of 3S-hydroxyl-L-homotyrosine and L-ornithine dihydroxylation at C-4 and C-5 are performed by the cytochrome P450 monooxygenases gloP/GLP450-1 and gloO/GLP450-2, respectively. This is 3-isopropylmalate dehydrogenase gloI from Glarea lozoyensis (strain ATCC 20868 / MF5171).